The primary structure comprises 828 residues: Periplasmic nitrate reductase (828 aa).

Residues 1–33 (MKLSRRDFMKANAAVAAAAAAGLTIPTVVQAAA) constitute a signal peptide (tat-type signal). The 57-residue stretch at 39 to 95 (IKWDKAPCRFCGTGCGVLVGTQNGRIVASQGDPEAAVNRGLSCIKGYFLPKIMYGKD) folds into the 4Fe-4S Mo/W bis-MGD-type domain. [4Fe-4S] cluster-binding residues include cysteine 46, cysteine 49, cysteine 53, and cysteine 81. Residues lysine 83, glutamine 150, asparagine 175, cysteine 179, 212–219 (WGSNMAEM), 243–247 (STFEH), 262–264 (QTD), methionine 372, glutamine 376, asparagine 482, 508–509 (SD), lysine 531, aspartate 558, and 718–727 (TGRVLEHWHT) each bind Mo-bis(molybdopterin guanine dinucleotide). Residue phenylalanine 794 participates in substrate binding. Residues asparagine 802 and lysine 819 each contribute to the Mo-bis(molybdopterin guanine dinucleotide) site.

This sequence belongs to the prokaryotic molybdopterin-containing oxidoreductase family. NasA/NapA/NarB subfamily. In terms of assembly, component of the periplasmic nitrate reductase NapAB complex composed of NapA and NapB. It depends on [4Fe-4S] cluster as a cofactor. Mo-bis(molybdopterin guanine dinucleotide) is required as a cofactor. In terms of processing, predicted to be exported by the Tat system. The position of the signal peptide cleavage has not been experimentally proven.

It is found in the periplasm. The enzyme catalyses 2 Fe(II)-[cytochrome] + nitrate + 2 H(+) = 2 Fe(III)-[cytochrome] + nitrite + H2O. Functionally, catalytic subunit of the periplasmic nitrate reductase complex NapAB. Receives electrons from NapB and catalyzes the reduction of nitrate to nitrite. In Serratia proteamaculans (strain 568), this protein is Periplasmic nitrate reductase.